The following is a 462-amino-acid chain: uncharacterized protein (462 aa).

WD repeat units lie at residues 170 to 209 (GGER…EVQL), 212 to 260 (GHTD…PLLR), 263 to 302 (GHLA…ELLM), 305 to 344 (GHSE…SIMV), 347 to 386 (EHIR…LAHT), 389 to 430 (AHSS…LIKS), and 433 to 462 (GHEE…LWYP).

The protein localises to the cytoplasm. This is an uncharacterized protein from Schizosaccharomyces pombe (strain 972 / ATCC 24843) (Fission yeast).